A 515-amino-acid chain; its full sequence is BURP domain-containing protein 9 (515 aa).

The signal sequence occupies residues 1-29; it reads MKATGGPLPLILFLLIIIVLITAQHTAIA. In terms of domain architecture, BURP spans 292–507; that stretch reads YFFEDNLAPG…GRGSIIWVPV (216 aa). N-linked (GlcNAc...) asparagine glycans are attached at residues N321, N332, and N470.

In terms of tissue distribution, expressed in shoot and panicles.

This Oryza sativa subsp. japonica (Rice) protein is BURP domain-containing protein 9 (BURP9).